The sequence spans 324 residues: N-acetyl-gamma-glutamyl-phosphate reductase (324 aa).

Cys-131 is a catalytic residue.

It belongs to the NAGSA dehydrogenase family. Type 1 subfamily.

The protein localises to the cytoplasm. The catalysed reaction is N-acetyl-L-glutamate 5-semialdehyde + phosphate + NADP(+) = N-acetyl-L-glutamyl 5-phosphate + NADPH + H(+). Its pathway is amino-acid biosynthesis; L-arginine biosynthesis; N(2)-acetyl-L-ornithine from L-glutamate: step 3/4. In terms of biological role, catalyzes the NADPH-dependent reduction of N-acetyl-5-glutamyl phosphate to yield N-acetyl-L-glutamate 5-semialdehyde. This chain is N-acetyl-gamma-glutamyl-phosphate reductase, found in Bradyrhizobium sp. (strain BTAi1 / ATCC BAA-1182).